Consider the following 230-residue polypeptide: MQRGKKYKALKEKVDSTKFFNIDQAVELAKSTSYTKFDGTVEIATKVDYKSLQNIRGTISLPHGNGKKVRVLVFCKGDKQNDAKAAGAEFVGDMDLIEKVAGGWTDFDACVATPDMMKDVGKLGPILGRKGLMPKPKAGTVTTDVAKAVNELKSGRVEYRPDKGGVVHLGVGKVSFDNAKLVENIRTVVQTLMRDKPSDAKGDYLKTFSVSPTMGVGVKVDVKELVNTSI.

This sequence belongs to the universal ribosomal protein uL1 family. Part of the 50S ribosomal subunit.

In terms of biological role, binds directly to 23S rRNA. The L1 stalk is quite mobile in the ribosome, and is involved in E site tRNA release. Functionally, protein L1 is also a translational repressor protein, it controls the translation of the L11 operon by binding to its mRNA. This Leptospira borgpetersenii serovar Hardjo-bovis (strain JB197) protein is Large ribosomal subunit protein uL1.